The primary structure comprises 190 residues: Adenylate kinase (190 aa).

11–16 (GAGKGT) is an ATP binding site. Residues 31–60 (STGDIFRFNLKNDTELGKQARVFMDNGELV) form an NMP region. AMP-binding positions include threonine 32, arginine 37, 58–60 (ELV), 86–89 (GYPR), and glutamine 93. The interval 127 to 137 (ERGKTSGRADD) is LID. An ATP-binding site is contributed by arginine 128. 2 residues coordinate AMP: arginine 134 and arginine 146. Glycine 174 contributes to the ATP binding site.

The protein belongs to the adenylate kinase family. As to quaternary structure, monomer.

Its subcellular location is the cytoplasm. It catalyses the reaction AMP + ATP = 2 ADP. It participates in purine metabolism; AMP biosynthesis via salvage pathway; AMP from ADP: step 1/1. Its function is as follows. Catalyzes the reversible transfer of the terminal phosphate group between ATP and AMP. Plays an important role in cellular energy homeostasis and in adenine nucleotide metabolism. This is Adenylate kinase from Flavobacterium johnsoniae (strain ATCC 17061 / DSM 2064 / JCM 8514 / BCRC 14874 / CCUG 350202 / NBRC 14942 / NCIMB 11054 / UW101) (Cytophaga johnsonae).